A 109-amino-acid polypeptide reads, in one-letter code: Spermidine export protein MdtI (109 aa).

Helical transmembrane passes span 6-26, 36-56, 64-84, and 88-108; these read WVHA…NVFL, IFGL…SQAV, AYAL…WILF, and LNRK…MVKL.

It belongs to the drug/metabolite transporter (DMT) superfamily. Small multidrug resistance (SMR) (TC 2.A.7.1) family. MdtI subfamily. As to quaternary structure, forms a complex with MdtJ.

The protein resides in the cell inner membrane. Its function is as follows. Catalyzes the excretion of spermidine. This chain is Spermidine export protein MdtI, found in Escherichia coli O139:H28 (strain E24377A / ETEC).